The sequence spans 193 residues: UPF0314 protein Pden_1914 (193 aa).

A run of 4 helical transmembrane segments spans residues 13 to 33 (APYWATFLVIVLAALWLLWIG), 62 to 82 (WYTPSHVIHGLVFYAALWLVA), 148 to 168 (LPVWASVAIVIGFEALTTWLI), and 172 to 192 (LALNVLMLLWPLEAVRGWQAA).

The protein belongs to the UPF0314 family.

It is found in the cell membrane. The protein is UPF0314 protein Pden_1914 of Paracoccus denitrificans (strain Pd 1222).